The following is a 147-amino-acid chain: uncharacterized protein (147 aa).

2 helical membrane passes run 41-61 and 67-87; these read LANF…ALLI and LLAA…SFPL.

It is found in the cell membrane. This is an uncharacterized protein from Pyrococcus horikoshii (strain ATCC 700860 / DSM 12428 / JCM 9974 / NBRC 100139 / OT-3).